A 611-amino-acid polypeptide reads, in one-letter code: Procollagen galactosyltransferase 1-A (611 aa).

Positions 1 to 24 are cleaved as a signal peptide; the sequence is MSQAGVDRLLRGLQLLLLVLRLSA. Residues Asn85, Asn173, Asn312, Asn370, and Asn568 are each glycosylated (N-linked (GlcNAc...) asparagine). The segment covering 575–591 has biased composition (basic and acidic residues); that stretch reads WDRAKSRKTQQQEKLRS. The segment at 575 to 611 is disordered; sequence WDRAKSRKTQQQEKLRSEALNSPSLGSPFDNTARDEL. The Prevents secretion from ER signature appears at 608–611; it reads RDEL.

This sequence belongs to the glycosyltransferase 25 family.

Its subcellular location is the endoplasmic reticulum lumen. It catalyses the reaction (5R)-5-hydroxy-L-lysyl-[collagen] + UDP-alpha-D-galactose = (5R)-5-O-(beta-D-galactosyl)-5-hydroxy-L-lysyl-[collagen] + UDP + H(+). In terms of biological role, beta-galactosyltransferase that transfers beta-galactose to hydroxylysine residues of type I collagen. By acting on collagen glycosylation, facilitates the formation of collagen triple helix. This is Procollagen galactosyltransferase 1-A (colgalt1-a) from Xenopus laevis (African clawed frog).